The chain runs to 312 residues: Ribosomal protein L11 methyltransferase (312 aa).

4 residues coordinate S-adenosyl-L-methionine: Thr162, Gly183, Asp205, and Asn248.

Belongs to the methyltransferase superfamily. PrmA family.

The protein localises to the cytoplasm. It carries out the reaction L-lysyl-[protein] + 3 S-adenosyl-L-methionine = N(6),N(6),N(6)-trimethyl-L-lysyl-[protein] + 3 S-adenosyl-L-homocysteine + 3 H(+). Methylates ribosomal protein L11. This is Ribosomal protein L11 methyltransferase from Geobacillus thermodenitrificans (strain NG80-2).